Reading from the N-terminus, the 442-residue chain is Dol-P-Man:Man(5)GlcNAc(2)-PP-Dol alpha-1,3-mannosyltransferase (442 aa).

At 1-34 (MAAPSSRPESNPPLYKQALDFALDVANGRHALSK) the chain is on the lumenal side. Residues 35-55 (LIPPALFLVDALLCGLIIWKV) traverse the membrane as a helical segment. The Cytoplasmic segment spans residues 56-84 (PYTEIDWAAYMEQVSQILSGERDYTKVRG). A helical membrane pass occupies residues 85-105 (GTGPLVYPAAHVYIYTGLYHL). Residues 106–111 (TDEGRN) lie on the Lumenal side of the membrane. A helical membrane pass occupies residues 112–132 (ILLAQQLFAGLYMVTLAVVMG). Topologically, residues 133–155 (CYWQAKAPPYLFPLLTLSKRLHS) are cytoplasmic. Residues 156-176 (IFVLRCFNDCFAVLFLWLAIF) traverse the membrane as a helical segment. Residues 177 to 198 (FFQRRNWQAGALLYTLGLGVKM) are Lumenal-facing. The helical transmembrane segment at 199 to 219 (TLLLSLPAVGIVLFLGSGSFV) threads the bilayer. Position 220 (T220) is a topological domain, cytoplasmic. A helical membrane pass occupies residues 221-241 (TLQLVATMGLVQILIGVPFLA). The Lumenal segment spans residues 242-272 (HYPTEYLSRAFELSRQFFFKWTVNWRFVGEE). Residues 273 to 293 (IFLSKGFALTLLALHVLVLGI) form a helical membrane-spanning segment. Residues 294-333 (FITTRWIKPARKSLVQLISPVLLAGKPPLTVPEHRAAARD) lie on the Cytoplasmic side of the membrane. The chain crosses the membrane as a helical span at residues 334-354 (VTPRYIMTTILSANAVGLLFA). Residues 355-376 (RSLHYQFYAYVAWSTPFLLWRA) are Lumenal-facing. A helical transmembrane segment spans residues 377–397 (GLHPVLVYLLWAVHEWAWNVF). Topologically, residues 398 to 401 (PSTP) are cytoplasmic. Residues 402-422 (ASSAVVVGVLGVTVAGVWFGA) form a helical membrane-spanning segment. Residues 423-442 (REEWEPGMKSSSKKEEAAMR) are Lumenal-facing.

Belongs to the glycosyltransferase ALG3 family.

The protein resides in the endoplasmic reticulum membrane. The enzyme catalyses an alpha-D-Man-(1-&gt;2)-alpha-D-Man-(1-&gt;2)-alpha-D-Man-(1-&gt;3)-[alpha-D-Man-(1-&gt;6)]-beta-D-Man-(1-&gt;4)-beta-D-GlcNAc-(1-&gt;4)-alpha-D-GlcNAc-diphospho-di-trans,poly-cis-dolichol + a di-trans,poly-cis-dolichyl beta-D-mannosyl phosphate = an alpha-D-Man-(1-&gt;2)-alpha-D-Man-(1-&gt;2)-alpha-D-Man-(1-&gt;3)-[alpha-D-Man-(1-&gt;3)-alpha-D-Man-(1-&gt;6)]-beta-D-Man-(1-&gt;4)-beta-D-GlcNAc-(1-&gt;4)-alpha-D-GlcNAc-diphospho-di-trans,poly-cis-dolichol + a di-trans,poly-cis-dolichyl phosphate + H(+). Its pathway is protein modification; protein glycosylation. Dol-P-Man:Man(5)GlcNAc(2)-PP-Dol alpha-1,3-mannosyltransferase that operates in the biosynthetic pathway of dolichol-linked oligosaccharides, the glycan precursors employed in protein asparagine (N)-glycosylation. The assembly of dolichol-linked oligosaccharides begins on the cytosolic side of the endoplasmic reticulum membrane and finishes in its lumen. The sequential addition of sugars to dolichol pyrophosphate produces dolichol-linked oligosaccharides containing fourteen sugars, including two GlcNAcs, nine mannoses and three glucoses. Once assembled, the oligosaccharide is transferred from the lipid to nascent proteins by oligosaccharyltransferases. In the lumen of the endoplasmic reticulum, adds the first dolichyl beta-D-mannosyl phosphate derived mannose in an alpha-1,3 linkage to Man(5)GlcNAc(2)-PP-dolichol to produce Man(6)GlcNAc(2)-PP-dolichol. This chain is Dol-P-Man:Man(5)GlcNAc(2)-PP-Dol alpha-1,3-mannosyltransferase (alg-3), found in Neurospora crassa (strain ATCC 24698 / 74-OR23-1A / CBS 708.71 / DSM 1257 / FGSC 987).